Reading from the N-terminus, the 954-residue chain is Valine--tRNA ligase (954 aa).

The 'HIGH' region signature appears at 48-58 (PNVTGSLHMGH). Residues 560 to 564 (KMSKS) carry the 'KMSKS' region motif. ATP is bound at residue K563. The stretch at 883 to 954 (AGFINKEAEL…QTQYQAIENL (72 aa)) forms a coiled coil.

Belongs to the class-I aminoacyl-tRNA synthetase family. ValS type 1 subfamily. As to quaternary structure, monomer.

The protein resides in the cytoplasm. The catalysed reaction is tRNA(Val) + L-valine + ATP = L-valyl-tRNA(Val) + AMP + diphosphate. In terms of biological role, catalyzes the attachment of valine to tRNA(Val). As ValRS can inadvertently accommodate and process structurally similar amino acids such as threonine, to avoid such errors, it has a 'posttransfer' editing activity that hydrolyzes mischarged Thr-tRNA(Val) in a tRNA-dependent manner. This chain is Valine--tRNA ligase, found in Actinobacillus pleuropneumoniae serotype 5b (strain L20).